Here is a 141-residue protein sequence, read N- to C-terminus: Large ribosomal subunit protein uL13 (141 aa).

It belongs to the universal ribosomal protein uL13 family. Part of the 50S ribosomal subunit.

In terms of biological role, this protein is one of the early assembly proteins of the 50S ribosomal subunit, although it is not seen to bind rRNA by itself. It is important during the early stages of 50S assembly. This chain is Large ribosomal subunit protein uL13, found in Deinococcus deserti (strain DSM 17065 / CIP 109153 / LMG 22923 / VCD115).